The following is a 179-amino-acid chain: Cytochrome b6-f complex iron-sulfur subunit (179 aa).

A helical membrane pass occupies residues 21–43 (LLTFGTVTGVALGALYPVVNYFI). Residues 61 to 162 (GNDVSVTKFL…TNVSDDKIVL (102 aa)) form the Rieske domain. Residues Cys-108, His-110, Cys-126, and His-129 each coordinate [2Fe-2S] cluster. Cys-113 and Cys-128 are disulfide-bonded.

Belongs to the Rieske iron-sulfur protein family. In terms of assembly, the 4 large subunits of the cytochrome b6-f complex are cytochrome b6, subunit IV (17 kDa polypeptide, PetD), cytochrome f and the Rieske protein, while the 4 small subunits are PetG, PetL, PetM and PetN. The complex functions as a dimer. It depends on [2Fe-2S] cluster as a cofactor.

Its subcellular location is the cellular thylakoid membrane. It catalyses the reaction 2 oxidized [plastocyanin] + a plastoquinol + 2 H(+)(in) = 2 reduced [plastocyanin] + a plastoquinone + 4 H(+)(out). Its function is as follows. Component of the cytochrome b6-f complex, which mediates electron transfer between photosystem II (PSII) and photosystem I (PSI), cyclic electron flow around PSI, and state transitions. The protein is Cytochrome b6-f complex iron-sulfur subunit of Nostoc punctiforme (strain ATCC 29133 / PCC 73102).